The primary structure comprises 196 residues: dTTP/UTP pyrophosphatase (196 aa).

Asp75 acts as the Proton acceptor in catalysis.

The protein belongs to the Maf family. YhdE subfamily. Requires a divalent metal cation as cofactor.

It is found in the cytoplasm. The enzyme catalyses dTTP + H2O = dTMP + diphosphate + H(+). The catalysed reaction is UTP + H2O = UMP + diphosphate + H(+). Nucleoside triphosphate pyrophosphatase that hydrolyzes dTTP and UTP. May have a dual role in cell division arrest and in preventing the incorporation of modified nucleotides into cellular nucleic acids. This is dTTP/UTP pyrophosphatase from Wolbachia pipientis subsp. Culex pipiens (strain wPip).